A 293-amino-acid polypeptide reads, in one-letter code: ATP synthase gamma chain (293 aa).

This sequence belongs to the ATPase gamma chain family. As to quaternary structure, F-type ATPases have 2 components, CF(1) - the catalytic core - and CF(0) - the membrane proton channel. CF(1) has five subunits: alpha(3), beta(3), gamma(1), delta(1), epsilon(1). CF(0) has three main subunits: a, b and c.

It localises to the cell inner membrane. Functionally, produces ATP from ADP in the presence of a proton gradient across the membrane. The gamma chain is believed to be important in regulating ATPase activity and the flow of protons through the CF(0) complex. The polypeptide is ATP synthase gamma chain (Allorhizobium ampelinum (strain ATCC BAA-846 / DSM 112012 / S4) (Agrobacterium vitis (strain S4))).